The following is a 276-amino-acid chain: Large ribosomal subunit protein uL2 (276 aa).

2 disordered regions span residues 37-59 (QFQK…GGHK) and 225-276 (VMNP…RHKR). Over residues 39 to 49 (QKSGRNNNGHI) the composition is skewed to polar residues. Positions 50-59 (TTRHKGGGHK) are enriched in basic residues.

It belongs to the universal ribosomal protein uL2 family. In terms of assembly, part of the 50S ribosomal subunit. Forms a bridge to the 30S subunit in the 70S ribosome.

One of the primary rRNA binding proteins. Required for association of the 30S and 50S subunits to form the 70S ribosome, for tRNA binding and peptide bond formation. It has been suggested to have peptidyltransferase activity; this is somewhat controversial. Makes several contacts with the 16S rRNA in the 70S ribosome. This is Large ribosomal subunit protein uL2 from Cupriavidus pinatubonensis (strain JMP 134 / LMG 1197) (Cupriavidus necator (strain JMP 134)).